Here is a 418-residue protein sequence, read N- to C-terminus: MNQSAEIICVGTELLLGEILNSNAQFLAQQLAQLGIPHYYQTVVGDNPVRLKKAVAIACERSRLLIFTGGLGPTPDDLTTETLADFFDLPLVEHPEILADITRKYAHRGRTITANNRKQALLPLGAAILPNPTGTAPGMIWHPRPSLTVLTFPGVPSEMQCMWQETAIPYLRAQGWGQEMIYSQVLRFWGIAESALAERVAPFLELASPTVAPYASHGEARLRISVRAANETEALEQIQPIATQIHQLTGLDCYGSDEDSLASVLGKLLHSRQETLSVAESCTGGGLGQMLTAIPGSSAYFWGGVISYDNQVKISLLGVDPDTLTRVGAVSAAVAEQMALGVRSRLETTWGLSITGIAGPGGGTETKPVGLVYIGLAGPAGVEHYECRFSDFRGRDWIRHLSACTALDYLRRKLLTLG.

It belongs to the CinA family.

This Cyanothece sp. (strain PCC 7425 / ATCC 29141) protein is CinA-like protein.